The chain runs to 217 residues: Large ribosomal subunit protein bL25 (217 aa).

A compositionally biased stretch (low complexity) spans proline 195–alanine 211. A disordered region spans residues proline 195–lysine 217.

The protein belongs to the bacterial ribosomal protein bL25 family. CTC subfamily. In terms of assembly, part of the 50S ribosomal subunit; part of the 5S rRNA/L5/L18/L25 subcomplex. Contacts the 5S rRNA. Binds to the 5S rRNA independently of L5 and L18.

In terms of biological role, this is one of the proteins that binds to the 5S RNA in the ribosome where it forms part of the central protuberance. The sequence is that of Large ribosomal subunit protein bL25 from Acidiphilium cryptum (strain JF-5).